The sequence spans 427 residues: Inorganic pyrophosphatase 1 (427 aa).

A compositionally biased stretch (low complexity) spans 36 to 52; that stretch reads SSSSNTATTSTSSSNTS. Disordered regions lie at residues 36–63 and 77–118; these read SSSS…TSRP and SMDS…RSLH. Polar residues-rich tracts occupy residues 53–63 and 77–114; these read QKWATSRTSRP and SMDS…ANSE. 3 residues coordinate Mg(2+): Asp-259, Asp-264, and Asp-296.

The protein belongs to the PPase family. Mg(2+) is required as a cofactor. In terms of tissue distribution, expressed in coelomocytes, the intestine and in the nervous system including the nerve cords and sensory neurons.

The protein resides in the cytoplasm. The enzyme catalyses diphosphate + H2O = 2 phosphate + H(+). In terms of biological role, catalyzes the hydrolysis of inorganic pyrophosphate (PPi) forming two phosphate ions. Plays a role in intestinal development and subsequent normal secretory, digestive and absorption functions. Required for larval development. This is Inorganic pyrophosphatase 1 from Caenorhabditis elegans.